The following is a 108-amino-acid chain: NADH dehydrogenase [ubiquinone] flavoprotein 3, mitochondrial (108 aa).

The transit peptide at 1-34 (MAASCLLRQGRAGALKTMLQEAQVFRGLASTVSL) directs the protein to the mitochondrion. Residues 33-72 (SLSAESGKSEKGQPQNSKKQSPPKKPAPVPAEPFDNSTYK) are disordered. The residue at position 105 (Ser105) is a Phosphoserine.

The protein belongs to the complex I NDUFV3 subunit family. As to quaternary structure, complex I is composed of 45 different subunits. This is a component of the flavoprotein-sulfur (FP) fragment of the enzyme.

The protein resides in the mitochondrion inner membrane. In terms of biological role, accessory subunit of the mitochondrial membrane respiratory chain NADH dehydrogenase (Complex I), that is believed not to be involved in catalysis. Complex I functions in the transfer of electrons from NADH to the respiratory chain. The immediate electron acceptor for the enzyme is believed to be ubiquinone. May be the terminally assembled subunit of Complex I. The polypeptide is NADH dehydrogenase [ubiquinone] flavoprotein 3, mitochondrial (NDUFV3) (Gorilla gorilla gorilla (Western lowland gorilla)).